Here is a 440-residue protein sequence, read N- to C-terminus: Tubulin beta-3 chain (440 aa).

8 residues coordinate GTP: Q2, E60, S129, G133, T134, G135, N195, and N217. E60 is a binding site for Mg(2+). A disordered region spans residues 411 to 440 (SEYQQYQDATADEEGEYEDEEEEEPEHGYE). Over residues 420–440 (TADEEGEYEDEEEEEPEHGYE) the composition is skewed to acidic residues.

This sequence belongs to the tubulin family. As to quaternary structure, dimer of alpha and beta chains. A typical microtubule is a hollow water-filled tube with an outer diameter of 25 nm and an inner diameter of 15 nM. Alpha-beta heterodimers associate head-to-tail to form protofilaments running lengthwise along the microtubule wall with the beta-tubulin subunit facing the microtubule plus end conferring a structural polarity. Microtubules usually have 13 protofilaments but different protofilament numbers can be found in some organisms and specialized cells. The cofactor is Mg(2+).

It localises to the cytoplasm. The protein localises to the cytoskeleton. Functionally, tubulin is the major constituent of microtubules, a cylinder consisting of laterally associated linear protofilaments composed of alpha- and beta-tubulin heterodimers. Microtubules grow by the addition of GTP-tubulin dimers to the microtubule end, where a stabilizing cap forms. Below the cap, tubulin dimers are in GDP-bound state, owing to GTPase activity of alpha-tubulin. This is Tubulin beta-3 chain (TUBB3) from Pisum sativum (Garden pea).